Reading from the N-terminus, the 734-residue chain is Photosystem I P700 chlorophyll a apoprotein A2 (734 aa).

Helical transmembrane passes span 46–69 (IFAS…FHVA), 135–158 (LYTG…LHLQ), 175–199 (LNHH…HVAI), 273–291 (MAHH…GHMY), 330–353 (LHFQ…QHMY), 369–395 (AALY…IFFL), 417–439 (AIIS…LYVH), and 517–535 (FLVH…LILV). C559 and C568 together coordinate [4Fe-4S] cluster. The next 2 helical transmembrane spans lie at 575-596 (AFYL…YWHW) and 643-665 (LSVW…MFLI). Chlorophyll a is bound by residues H654, M662, and Y670. W671 is a binding site for phylloquinone. A helical transmembrane segment spans residues 707-727 (LVGLAHFSVGYIFTYAAFLIA).

This sequence belongs to the PsaA/PsaB family. The PsaA/B heterodimer binds the P700 chlorophyll special pair and subsequent electron acceptors. PSI consists of a core antenna complex that captures photons, and an electron transfer chain that converts photonic excitation into a charge separation. The eukaryotic PSI reaction center is composed of at least 11 subunits. Requires P700 is a chlorophyll a/chlorophyll a' dimer, A0 is one or more chlorophyll a, A1 is one or both phylloquinones and FX is a shared 4Fe-4S iron-sulfur center. as cofactor.

It localises to the plastid. The protein resides in the chloroplast thylakoid membrane. The catalysed reaction is reduced [plastocyanin] + hnu + oxidized [2Fe-2S]-[ferredoxin] = oxidized [plastocyanin] + reduced [2Fe-2S]-[ferredoxin]. In terms of biological role, psaA and PsaB bind P700, the primary electron donor of photosystem I (PSI), as well as the electron acceptors A0, A1 and FX. PSI is a plastocyanin-ferredoxin oxidoreductase, converting photonic excitation into a charge separation, which transfers an electron from the donor P700 chlorophyll pair to the spectroscopically characterized acceptors A0, A1, FX, FA and FB in turn. Oxidized P700 is reduced on the lumenal side of the thylakoid membrane by plastocyanin. This Adiantum capillus-veneris (Maidenhair fern) protein is Photosystem I P700 chlorophyll a apoprotein A2.